The chain runs to 203 residues: Small ribosomal subunit protein uS4 (203 aa).

Residues 93 to 156 (RRLDNVVYRL…MKVPAILEAV (64 aa)) form the S4 RNA-binding domain.

This sequence belongs to the universal ribosomal protein uS4 family. Part of the 30S ribosomal subunit. Contacts protein S5. The interaction surface between S4 and S5 is involved in control of translational fidelity.

One of the primary rRNA binding proteins, it binds directly to 16S rRNA where it nucleates assembly of the body of the 30S subunit. Functionally, with S5 and S12 plays an important role in translational accuracy. The chain is Small ribosomal subunit protein uS4 from Streptococcus pyogenes serotype M4 (strain MGAS10750).